A 437-amino-acid polypeptide reads, in one-letter code: Adenylosuccinate synthetase (437 aa).

Residues glycine 25–lysine 31, glycine 53–threonine 55, and lysine 62 contribute to the GTP site. Aspartate 26 (proton acceptor) is an active-site residue. Mg(2+) is bound by residues aspartate 26 and glycine 53. Residues aspartate 26–lysine 29 and asparagine 51–histidine 54 each bind IMP. Histidine 54 acts as the Proton donor in catalysis. Threonine 141, arginine 155, asparagine 232, and threonine 247 together coordinate IMP. Position 307 (threonine 307) interacts with GTP. Threonine 307–arginine 313 serves as a coordination point for substrate. Arginine 311 lines the IMP pocket. GTP contacts are provided by residues arginine 313, lysine 339–aspartate 341, and glycine 425–glycine 427.

The protein belongs to the adenylosuccinate synthetase family. Homodimer. Requires Mg(2+) as cofactor.

Its subcellular location is the cytoplasm. The enzyme catalyses IMP + L-aspartate + GTP = N(6)-(1,2-dicarboxyethyl)-AMP + GDP + phosphate + 2 H(+). It participates in purine metabolism; AMP biosynthesis via de novo pathway; AMP from IMP: step 1/2. Plays an important role in the salvage pathway for purine nucleotide biosynthesis. Catalyzes the first committed step in the biosynthesis of AMP from IMP. The chain is Adenylosuccinate synthetase from Plasmodium knowlesi (strain H).